The primary structure comprises 409 residues: Isocitrate dehydrogenase [NADP] 1 (409 aa).

NADP(+) is bound by residues Lys75, Thr78, Thr80, and Arg85. Mn(2+) contacts are provided by Asp255, Asp278, and Asp282. NADP(+)-binding residues include Gly313, Thr314, Val315, His318, and Asn331.

This sequence belongs to the isocitrate and isopropylmalate dehydrogenases family. Homodimer. The cofactor is Mg(2+). It depends on Mn(2+) as a cofactor.

It carries out the reaction D-threo-isocitrate + NADP(+) = 2-oxoglutarate + CO2 + NADPH. In terms of biological role, catalyzes the oxidative decarboxylation of isocitrate to 2-oxoglutarate and carbon dioxide with the concomitant reduction of NADP(+). This is Isocitrate dehydrogenase [NADP] 1 (icd) from Mycobacterium bovis (strain ATCC BAA-935 / AF2122/97).